Reading from the N-terminus, the 79-residue chain is Large ribosomal subunit protein uL30 (79 aa).

Belongs to the universal ribosomal protein uL30 family. Part of the 50S ribosomal subunit.

The chain is Large ribosomal subunit protein uL30 from Anaeromyxobacter sp. (strain Fw109-5).